Reading from the N-terminus, the 333-residue chain is 5-formaminoimidazole-4-carboxamide-1-(beta)-D-ribofuranosyl 5'-monophosphate synthetase (333 aa).

2 residues coordinate 5-amino-1-(5-phospho-beta-D-ribosyl)imidazole-4-carboxamide: His-21 and Ser-84. In terms of domain architecture, ATP-grasp spans 118–313 (MELLAAAGIP…YFDEPMDMGE (196 aa)). ATP is bound by residues 141–187 (PVIV…VPAY) and Glu-209. Asn-229 is a 5-amino-1-(5-phospho-beta-D-ribosyl)imidazole-4-carboxamide binding site. Residues Glu-268 and Glu-281 each contribute to the Mg(2+) site.

Belongs to the phosphohexose mutase family. Mg(2+) is required as a cofactor. Mn(2+) serves as cofactor.

The catalysed reaction is 5-amino-1-(5-phospho-beta-D-ribosyl)imidazole-4-carboxamide + formate + ATP = 5-formamido-1-(5-phospho-D-ribosyl)imidazole-4-carboxamide + ADP + phosphate. It participates in purine metabolism; IMP biosynthesis via de novo pathway; 5-formamido-1-(5-phospho-D-ribosyl)imidazole-4-carboxamide from 5-amino-1-(5-phospho-D-ribosyl)imidazole-4-carboxamide (formate route): step 1/1. Functionally, catalyzes the ATP- and formate-dependent formylation of 5-aminoimidazole-4-carboxamide-1-beta-d-ribofuranosyl 5'-monophosphate (AICAR) to 5-formaminoimidazole-4-carboxamide-1-beta-d-ribofuranosyl 5'-monophosphate (FAICAR) in the absence of folates. The polypeptide is 5-formaminoimidazole-4-carboxamide-1-(beta)-D-ribofuranosyl 5'-monophosphate synthetase (Pyrobaculum calidifontis (strain DSM 21063 / JCM 11548 / VA1)).